The following is a 443-amino-acid chain: Flavastacin (443 aa).

The signal sequence occupies residues 1–15; sequence MTRKLLILSGCLILA. Residues 16 to 91 constitute a propeptide, activation peptide; that stretch reads LNSCKSDMET…ANPDISTVER (76 aa). One can recognise a Peptidase M12A domain in the interval 92–289; the sequence is STIVSSFIKT…AGINHLYGPV (198 aa). His189 contributes to the Zn(2+) binding site. Glu190 is a catalytic residue. Residues His193 and His199 each contribute to the Zn(2+) site. In terms of domain architecture, Ricin B-type lectin spans 297–440; that stretch reads GTYTLTTSLA…PYTKQRFTLT (144 aa). Residue Ser355 is glycosylated (O-linked (Man...) serine).

It depends on Zn(2+) as a cofactor. Post-translationally, O-linked glycan consists of the Man, GlcNAc, GlcU, Glc, GlcU, Rha, Man heptasaccharide.

The catalysed reaction is Hydrolyzes polypeptides on the amino-side of Asp in -Xaa-|-Asp-. Acts very slowly on -Xaa-|-Glu.. Zinc metallendopeptidase that cleaves preferentially on N-terminal side of aspartate-containing substrates. The chain is Flavastacin from Elizabethkingia meningoseptica (Chryseobacterium meningosepticum).